The following is a 433-amino-acid chain: 3-phosphoshikimate 1-carboxyvinyltransferase (433 aa).

Lys22, Ser23, and Arg27 together coordinate 3-phosphoshikimate. Lys22 is a phosphoenolpyruvate binding site. Gly96 and Arg130 together coordinate phosphoenolpyruvate. 3-phosphoshikimate contacts are provided by Ser176, Ser177, Gln178, Ser204, Asp319, Asn342, and Lys346. Gln178 is a phosphoenolpyruvate binding site. Residue Asp319 is the Proton acceptor of the active site. The phosphoenolpyruvate site is built by Arg350, Arg394, and Lys419.

The protein belongs to the EPSP synthase family. As to quaternary structure, monomer.

It localises to the cytoplasm. The enzyme catalyses 3-phosphoshikimate + phosphoenolpyruvate = 5-O-(1-carboxyvinyl)-3-phosphoshikimate + phosphate. The protein operates within metabolic intermediate biosynthesis; chorismate biosynthesis; chorismate from D-erythrose 4-phosphate and phosphoenolpyruvate: step 6/7. Functionally, catalyzes the transfer of the enolpyruvyl moiety of phosphoenolpyruvate (PEP) to the 5-hydroxyl of shikimate-3-phosphate (S3P) to produce enolpyruvyl shikimate-3-phosphate and inorganic phosphate. This chain is 3-phosphoshikimate 1-carboxyvinyltransferase, found in Actinobacillus succinogenes (strain ATCC 55618 / DSM 22257 / CCUG 43843 / 130Z).